We begin with the raw amino-acid sequence, 468 residues long: 3-isopropylmalate dehydratase large subunit (468 aa).

[4Fe-4S] cluster contacts are provided by Cys347, Cys407, and Cys410.

Belongs to the aconitase/IPM isomerase family. LeuC type 1 subfamily. As to quaternary structure, heterodimer of LeuC and LeuD. [4Fe-4S] cluster is required as a cofactor.

It catalyses the reaction (2R,3S)-3-isopropylmalate = (2S)-2-isopropylmalate. The protein operates within amino-acid biosynthesis; L-leucine biosynthesis; L-leucine from 3-methyl-2-oxobutanoate: step 2/4. Its function is as follows. Catalyzes the isomerization between 2-isopropylmalate and 3-isopropylmalate, via the formation of 2-isopropylmaleate. This chain is 3-isopropylmalate dehydratase large subunit, found in Prochlorococcus marinus (strain SARG / CCMP1375 / SS120).